Here is a 1247-residue protein sequence, read N- to C-terminus: uncharacterized protein (1247 aa).

Disordered regions lie at residues 25-141, 169-431, 472-667, 738-770, 807-857, 869-1087, 1099-1122, and 1139-1162; these read KYNN…HSPP, AANN…QQPQ, QQQP…PSSS, NSNS…SEPI, YSNR…QNIE, GKNF…NNNN, STLN…ESQQ, and QQQQ…KGDG. A compositionally biased stretch (low complexity) spans 26-125; that stretch reads YNNSNNYNNN…SNNSINSNSY (100 aa). Residues 126–139 are compositionally biased toward polar residues; it reads KVNTPTQNGKSSHS. Composition is skewed to low complexity over residues 169-178, 185-223, and 230-341; these read AANNGSSNSS, SNSN…NYNS, and NNNN…YSNS. The span at 342-356 shows a compositional bias: polar residues; it reads KYNQQKSYNNAPHQL. Composition is skewed to low complexity over residues 363–375, 385–394, 409–431, and 472–484; these read NSYY…NNGN, GSGNSSNSNG, QSQS…QQPQ, and QQQP…QQQQ. Over residues 511–522 the composition is skewed to polar residues; that stretch reads GLNNSLNGQTDL. Low complexity-rich tracts occupy residues 523 to 544, 553 to 628, 655 to 667, 738 to 759, 807 to 855, and 871 to 928; these read NNSN…TNNN, YNYN…VGSN, TPSS…PSSS, NSNS…NNNH, YSNR…DSQN, and NFNN…ENNN. Polar residues predominate over residues 929–942; it reads GDVFSNGFSTWTPK. Over residues 943 to 983 the composition is skewed to low complexity; the sequence is SGSNSLNNSQNNLSNGQNSSNNSQNNLNNSQNSLNSSGNHH. The segment covering 984–995 has biased composition (basic residues); that stretch reads SNYHGHNNHHHY. Residues 996–1021 show a composition bias toward low complexity; that stretch reads NNNNNNNNNNNNNNNNNNNNNNNGNG. The segment covering 1026–1044 has biased composition (polar residues); the sequence is YYNNKYQQKSPQHQSSNSV. The segment covering 1047-1060 has biased composition (pro residues); that stretch reads IPPPGFSTIAPPPG. Residues 1064 to 1087 show a composition bias toward low complexity; sequence NNNNNNNNNNNNNNNKNNNSNNNN. A compositionally biased stretch (polar residues) spans 1099–1108; sequence STLNNSQDDS. The span at 1110–1122 shows a compositional bias: low complexity; that stretch reads QQEQEQQEQESQQ.

This is an uncharacterized protein from Dictyostelium discoideum (Social amoeba).